The sequence spans 210 residues: MLKSVGVILVLSSPSGCGKTTVANKLLEKQKNNIVKSVSVTTRAARKGEKEGKDYYFVDREEFLRLCSNGEIIEHAEVFGNFYGVPRKNLEDNVDKGVSTLLVIDWQGAFKFMEMMREHVVSIFIMPPSMEELRRRLCGRRADDSEVVEARLKGAAFEISHCEAYDYVIVNEDIEETADRISNILRAEQMKTCRQVGLRELLESRFPIED.

Residues 6-186 (GVILVLSSPS…TADRISNILR (181 aa)) form the Guanylate kinase-like domain. Residue 13–20 (SPSGCGKT) coordinates ATP.

The protein belongs to the guanylate kinase family.

The protein resides in the cytoplasm. The catalysed reaction is GMP + ATP = GDP + ADP. Its function is as follows. Essential for recycling GMP and indirectly, cGMP. This is Guanylate kinase from Anaplasma phagocytophilum (strain HZ).